A 567-amino-acid chain; its full sequence is uncharacterized protein (567 aa).

6 consecutive transmembrane segments (helical) span residues 20–40 (FTILAFFYISSIFFLLCSGVL), 69–89 (SLETAWYLISAVAVFIASVFI), 95–115 (AYLTLLAITWIVLTITDVALI), 126–146 (ILLNILYNLFGAILLSLFMCL), 168–188 (IPLVSAIIIAILITAVIYLLF), and 528–548 (IFGSSIMDILKYIFGLGLLAI).

It is found in the cell membrane. This is an uncharacterized protein from Escherichia coli (strain K12).